A 427-amino-acid chain; its full sequence is Protein phosphatase methylesterase 1 (427 aa).

The interval 1–49 (MSELQKSFAKAKLAKLPPEAPPFSMHPPRDEDDSESASSTGTVVPSPSR) is disordered. A compositionally biased stretch (polar residues) spans 36–49 (SASSTGTVVPSPSR). Active-site residues include S207, D233, and H364. Residues 402–427 (SAAMKQGAEAGAVPPFGRGQGSSHKP) are disordered.

It belongs to the AB hydrolase superfamily.

It carries out the reaction [phosphatase 2A protein]-C-terminal L-leucine methyl ester + H2O = [phosphatase 2A protein]-C-terminal L-leucine + methanol + H(+). Demethylates proteins that have been reversibly carboxymethylated. Demethylates the phosphatase PP2A catalytic subunit. The chain is Protein phosphatase methylesterase 1 (ppe1) from Aspergillus oryzae (strain ATCC 42149 / RIB 40) (Yellow koji mold).